A 91-amino-acid chain; its full sequence is DNA-directed RNA polymerase subunit omega (91 aa).

It belongs to the RNA polymerase subunit omega family. The RNAP catalytic core consists of 2 alpha, 1 beta, 1 beta' and 1 omega subunit. When a sigma factor is associated with the core the holoenzyme is formed, which can initiate transcription.

The catalysed reaction is RNA(n) + a ribonucleoside 5'-triphosphate = RNA(n+1) + diphosphate. Functionally, promotes RNA polymerase assembly. Latches the N- and C-terminal regions of the beta' subunit thereby facilitating its interaction with the beta and alpha subunits. The polypeptide is DNA-directed RNA polymerase subunit omega (Serratia proteamaculans (strain 568)).